The primary structure comprises 554 residues: Urocanate hydratase (554 aa).

Residues 51–52 (GG), glutamine 129, 175–177 (GMG), glutamate 195, 241–242 (NA), 262–266 (QTSAH), 272–273 (YL), and tyrosine 321 each bind NAD(+). The active site involves cysteine 409. Glycine 491 lines the NAD(+) pocket.

It belongs to the urocanase family. The cofactor is NAD(+).

The protein resides in the cytoplasm. The catalysed reaction is 4-imidazolone-5-propanoate = trans-urocanate + H2O. It participates in amino-acid degradation; L-histidine degradation into L-glutamate; N-formimidoyl-L-glutamate from L-histidine: step 2/3. Functionally, catalyzes the conversion of urocanate to 4-imidazolone-5-propionate. This Caulobacter vibrioides (strain ATCC 19089 / CIP 103742 / CB 15) (Caulobacter crescentus) protein is Urocanate hydratase.